A 436-amino-acid polypeptide reads, in one-letter code: Proteasome-activating nucleotidase (436 aa).

Positions 7–98 form a coiled coil; sequence KDVRDLCEKF…LRSDLQRMKK (92 aa). ATP is bound by residues 223-228 and H362; that span reads GTGKTL. Positions 434–436 are docks into pockets in the proteasome alpha-ring to cause gate opening; it reads AYH.

Belongs to the AAA ATPase family. Homohexamer. The hexameric complex has a two-ring architecture resembling a top hat that caps the 20S proteasome core at one or both ends. Upon ATP-binding, the C-terminus of PAN interacts with the alpha-rings of the proteasome core by binding to the intersubunit pockets.

It localises to the cytoplasm. Its function is as follows. ATPase which is responsible for recognizing, binding, unfolding and translocation of substrate proteins into the archaeal 20S proteasome core particle. Is essential for opening the gate of the 20S proteasome via an interaction with its C-terminus, thereby allowing substrate entry and access to the site of proteolysis. Thus, the C-termini of the proteasomal ATPase function like a 'key in a lock' to induce gate opening and therefore regulate proteolysis. Unfolding activity requires energy from ATP hydrolysis, whereas ATP binding alone promotes ATPase-20S proteasome association which triggers gate opening, and supports translocation of unfolded substrates. This is Proteasome-activating nucleotidase from Methanopyrus kandleri (strain AV19 / DSM 6324 / JCM 9639 / NBRC 100938).